A 126-amino-acid polypeptide reads, in one-letter code: Small ribosomal subunit protein uS11 (126 aa).

It belongs to the universal ribosomal protein uS11 family. Part of the 30S ribosomal subunit. Interacts with proteins S7 and S18. Binds to IF-3.

In terms of biological role, located on the platform of the 30S subunit, it bridges several disparate RNA helices of the 16S rRNA. Forms part of the Shine-Dalgarno cleft in the 70S ribosome. The chain is Small ribosomal subunit protein uS11 from Desulfotalea psychrophila (strain LSv54 / DSM 12343).